A 424-amino-acid polypeptide reads, in one-letter code: Enolase (424 aa).

Residue Q165 participates in (2R)-2-phosphoglycerate binding. E207 acts as the Proton donor in catalysis. Residues D244, E283, and D310 each contribute to the Mg(2+) site. Residues K335, R364, S365, and K386 each coordinate (2R)-2-phosphoglycerate. The Proton acceptor role is filled by K335.

The protein belongs to the enolase family. Mg(2+) is required as a cofactor.

Its subcellular location is the cytoplasm. The protein resides in the secreted. It is found in the cell surface. It catalyses the reaction (2R)-2-phosphoglycerate = phosphoenolpyruvate + H2O. Its pathway is carbohydrate degradation; glycolysis; pyruvate from D-glyceraldehyde 3-phosphate: step 4/5. In terms of biological role, catalyzes the reversible conversion of 2-phosphoglycerate (2-PG) into phosphoenolpyruvate (PEP). It is essential for the degradation of carbohydrates via glycolysis. This chain is Enolase, found in Chlamydia trachomatis serovar D (strain ATCC VR-885 / DSM 19411 / UW-3/Cx).